Here is a 205-residue protein sequence, read N- to C-terminus: MSNIVWHQHSVDQAARAKLKGQNPVLLWFTGLSGAGKSTLAGALERALFEAGFHTYLLDGDNVRHGLCKDLGFSVADRDENLRRVGEVAKLMVDAGLVVLSAFISPTREERDSIRARFPTGQFIEVHVSTPLSICEQRDPKGLYVKARRGEISNFTGISSPYEAPLSAELTIDTSKGDLASQVRALIDYLTAIEVINPSRLTASA.

Residue 31-38 (GLSGAGKS) coordinates ATP. Catalysis depends on S105, which acts as the Phosphoserine intermediate.

It belongs to the APS kinase family.

It carries out the reaction adenosine 5'-phosphosulfate + ATP = 3'-phosphoadenylyl sulfate + ADP + H(+). The protein operates within sulfur metabolism; hydrogen sulfide biosynthesis; sulfite from sulfate: step 2/3. Catalyzes the synthesis of activated sulfate. The polypeptide is Adenylyl-sulfate kinase (Shewanella sp. (strain MR-4)).